Here is a 238-residue protein sequence, read N- to C-terminus: Probable transcriptional regulatory protein MGAS2096_Spy0287 (238 aa).

Belongs to the TACO1 family. YeeN subfamily.

It is found in the cytoplasm. In Streptococcus pyogenes serotype M12 (strain MGAS2096), this protein is Probable transcriptional regulatory protein MGAS2096_Spy0287.